The chain runs to 38 residues: Tyrosinase inhibitor (38 aa).

Intrachain disulfides connect Cys-11/Cys-25, Cys-18/Cys-29, and Cys-24/Cys-36. 3',4'-dihydroxyphenylalanine is present on Tyr-32.

In terms of assembly, monomer. In terms of processing, contains L-DOPA (3',4'-dihydroxyphenylalanine).

It localises to the secreted. Potent reversible, competitive inhibitor of tyrosinase (phenol oxidase) in the nanomolar range. This chain is Tyrosinase inhibitor, found in Musca domestica (House fly).